An 82-amino-acid chain; its full sequence is Small ribosomal subunit protein uS17 (82 aa).

This sequence belongs to the universal ribosomal protein uS17 family. As to quaternary structure, part of the 30S ribosomal subunit.

Functionally, one of the primary rRNA binding proteins, it binds specifically to the 5'-end of 16S ribosomal RNA. The chain is Small ribosomal subunit protein uS17 from Bradyrhizobium sp. (strain BTAi1 / ATCC BAA-1182).